The primary structure comprises 514 residues: MSIQEEIKKRRTFAIISHPDAGKTTITEQLLYFGGEIREAGTVKGKKSGTFAKSDWMDIEKQRGISVTSSVMQFDYAGKRVNILDTPGHEDFSEDTYRTLMAVDAAVMVVDSAKGIEAQTKKLFEVVKHRGIPVFTFINKLDRDGREPLELLEELEEVLGIASFPMNWPIGMGKAFEGLYDLHNNRLELYKGENRFADLEEGAKLFANNPFYEQVLDDIELLQEAGNEFSEEAILSGELTPVFFGSALTNFGVQTFLDTFLEFAPEPHGHKTKEGQMIDPLEKDFSGFVFKIQANMDPRHRDRIAFVRIVSGEFVKGMGVNLTRTGKGAKLSNVTQFMAESRENVQNAVAGDIIGVYDTGTYQVGDTLTVGKHKFEFEPLPTFTPELFMKVSPKNVMKQKSFHKGMEQLVQEGAVQLYRNYQTGEYMLGAVGQLQFEVFKHRMEGEYNAEVIMTPMGKKTVRWIKEEDLDQRMSSSRNILAKDRFDQPVFLFENDFALRWFADKYPDVQLEEKM.

Residues 8 to 268 (KKRRTFAIIS…TFLEFAPEPH (261 aa)) form the tr-type G domain. GTP contacts are provided by residues 17 to 24 (SHPDAGKT), 85 to 89 (DTPGH), and 139 to 142 (NKLD).

It belongs to the TRAFAC class translation factor GTPase superfamily. Classic translation factor GTPase family. PrfC subfamily.

The protein localises to the cytoplasm. Functionally, increases the formation of ribosomal termination complexes and stimulates activities of RF-1 and RF-2. It binds guanine nucleotides and has strong preference for UGA stop codons. It may interact directly with the ribosome. The stimulation of RF-1 and RF-2 is significantly reduced by GTP and GDP, but not by GMP. In Streptococcus uberis (strain ATCC BAA-854 / 0140J), this protein is Peptide chain release factor 3.